A 556-amino-acid polypeptide reads, in one-letter code: Urocanate hydratase (556 aa).

Residues 52 to 53 (GG), Q130, 176 to 178 (GMG), E196, R201, 242 to 243 (NA), 263 to 267 (QTSAH), 273 to 274 (YL), and Y322 contribute to the NAD(+) site. The active site involves C410. Residue G492 participates in NAD(+) binding.

The protein belongs to the urocanase family. Requires NAD(+) as cofactor.

It localises to the cytoplasm. The enzyme catalyses 4-imidazolone-5-propanoate = trans-urocanate + H2O. It functions in the pathway amino-acid degradation; L-histidine degradation into L-glutamate; N-formimidoyl-L-glutamate from L-histidine: step 2/3. Catalyzes the conversion of urocanate to 4-imidazolone-5-propionate. This is Urocanate hydratase from Shewanella piezotolerans (strain WP3 / JCM 13877).